The following is a 337-amino-acid chain: GDP-fucose transporter, Golgi (337 aa).

The next 8 helical transmembrane spans lie at 13-35 (NKYLKIFFVVSLYWCTSILTVFV), 45-67 (VNLGAPLFMSWFQCVVSTVICFV), 95-117 (ILPLSVLYTLMIGANNLSLSYVT), 121-140 (YYIGRSLTTVFSVVLTYVIL), 145-163 (SFKCLLCCGAIVVGFWLGV), 173-192 (SWRGTIFGVLSSLALAMFSI), 205-227 (VWLLSYYNNLYSTLLFLPLIIIN), and 242-264 (SWFWAAMTLSGLCGFAIGFVTAL).

The protein belongs to the TPT transporter family. SLC35C subfamily.

The protein localises to the golgi apparatus membrane. Functionally, involved in GDP-fucose import from the cytoplasm into the Golgi lumen. Plays a major role in the fucosylation of N-glycans. Functions redundantly with Efr in the O-fucosylation of Notch, positively regulating Notch signaling. The sequence is that of GDP-fucose transporter, Golgi from Drosophila melanogaster (Fruit fly).